Reading from the N-terminus, the 313-residue chain is Transcription factor MafB (313 aa).

Disordered stretches follow at residues 51 to 77 (QPTGSVSSTPISTPCSSVPSSPSFSPT) and 151 to 197 (MGLP…VEDR). The segment covering 55-76 (SVSSTPISTPCSSVPSSPSFSP) has biased composition (low complexity). Residues 154–166 (PHHHPHHHQHQHH) show a composition bias toward basic residues. The span at 167-192 (QTSPSPSGSSSSSQQLHHQQQHSSSS) shows a compositional bias: low complexity. The basic motif stretch occupies residues 225–250 (RLKQKRRTLKNRGYAQSCRYKRVQQK). Positions 225–288 (RLKQKRRTLK…DAYKIKCEKL (64 aa)) constitute a bZIP domain. The tract at residues 253 to 274 (LEGEKTQLVQQVEQLKQEVSRL) is leucine-zipper. The tract at residues 292-313 (NSSNFREAGSTSDNPSSPEFFM) is disordered.

It belongs to the bZIP family. Maf subfamily. As to quaternary structure, homodimer or heterodimer with other bHLH-Zip transcription factors. Binds DNA as a homodimer or a heterodimer.

It localises to the nucleus. Its function is as follows. Acts as a transcriptional activator or repressor. Implicated in the regulation of cell-type specific gene expression and play a role in inductive events during lens development. This Xenopus laevis (African clawed frog) protein is Transcription factor MafB (mafb).